A 555-amino-acid polypeptide reads, in one-letter code: Glutamate--tRNA ligase (555 aa).

Residues 100–110 (PNPSGPLHIGH) carry the 'HIGH' region motif.

The protein belongs to the class-I aminoacyl-tRNA synthetase family. Glutamate--tRNA ligase type 2 subfamily.

The protein localises to the cytoplasm. The catalysed reaction is tRNA(Glu) + L-glutamate + ATP = L-glutamyl-tRNA(Glu) + AMP + diphosphate. Functionally, catalyzes the attachment of glutamate to tRNA(Glu) in a two-step reaction: glutamate is first activated by ATP to form Glu-AMP and then transferred to the acceptor end of tRNA(Glu). This is Glutamate--tRNA ligase from Methanococcus maripaludis (strain DSM 14266 / JCM 13030 / NBRC 101832 / S2 / LL).